The sequence spans 114 residues: RNA polymerase-binding protein RbpA (114 aa).

This sequence belongs to the RNA polymerase-binding protein RbpA family. In terms of assembly, monomer. Forms a complex with the RNAP catalytic core, specifically with the beta subunit (RpoB); its binding site may overlap with that of Rif. May bind free principal sigma factors.

Binds to RNA polymerase (RNAP), probably stimulating transcriptions from principal, but not alternative sigma factor promoters. Partially restores transcription in the presence of rifampicin (Rif) in vitro; overexpression leads to an increase in the Rif tolerance in vivo, with smaller colonies. Seems to act by removing Rif from its binding site and preventing its further binding. No longer stimulates transcription in Rif-resistant RNA polymerase (with mutations in rpoB). This is RNA polymerase-binding protein RbpA from Mycolicibacterium smegmatis (strain ATCC 700084 / mc(2)155) (Mycobacterium smegmatis).